An 85-amino-acid chain; its full sequence is Large ribosomal subunit protein bL27 (85 aa).

A disordered region spans residues 1-22; that stretch reads MAHKKAGGSTKNGRDSESKRLG.

This sequence belongs to the bacterial ribosomal protein bL27 family.

In Idiomarina loihiensis (strain ATCC BAA-735 / DSM 15497 / L2-TR), this protein is Large ribosomal subunit protein bL27.